Here is a 264-residue protein sequence, read N- to C-terminus: S-adenosylmethionine decarboxylase proenzyme (264 aa).

Serine 113 (schiff-base intermediate with substrate; via pyruvic acid) is an active-site residue. Serine 113 is subject to Pyruvic acid (Ser); by autocatalysis. The active-site Proton acceptor; for processing activity is histidine 118. The active-site Proton donor; for catalytic activity is the cysteine 141.

Belongs to the prokaryotic AdoMetDC family. Type 2 subfamily. Heterooctamer of four alpha and four beta chains arranged as a tetramer of alpha/beta heterodimers. Requires pyruvate as cofactor. In terms of processing, is synthesized initially as an inactive proenzyme. Formation of the active enzyme involves a self-maturation process in which the active site pyruvoyl group is generated from an internal serine residue via an autocatalytic post-translational modification. Two non-identical subunits are generated from the proenzyme in this reaction, and the pyruvate is formed at the N-terminus of the alpha chain, which is derived from the carboxyl end of the proenzyme. The post-translation cleavage follows an unusual pathway, termed non-hydrolytic serinolysis, in which the side chain hydroxyl group of the serine supplies its oxygen atom to form the C-terminus of the beta chain, while the remainder of the serine residue undergoes an oxidative deamination to produce ammonia and the pyruvoyl group blocking the N-terminus of the alpha chain.

The enzyme catalyses S-adenosyl-L-methionine + H(+) = S-adenosyl 3-(methylsulfanyl)propylamine + CO2. It participates in amine and polyamine biosynthesis; S-adenosylmethioninamine biosynthesis; S-adenosylmethioninamine from S-adenosyl-L-methionine: step 1/1. Functionally, catalyzes the decarboxylation of S-adenosylmethionine to S-adenosylmethioninamine (dcAdoMet), the propylamine donor required for the synthesis of the polyamines spermine and spermidine from the diamine putrescine. The sequence is that of S-adenosylmethionine decarboxylase proenzyme from Xylella fastidiosa (strain Temecula1 / ATCC 700964).